The following is a 90-amino-acid chain: Protein AF1q (90 aa).

Positions 24–32 (LSELEGLGL) match the Nuclear export signal motif. Residue serine 84 is modified to Phosphoserine.

The protein belongs to the MLLT11 family. Interacts with HSPA8 and LAMP2 isoform A; the interaction may target MLLT11 for degradation via chaperone-mediated autophagy. Interacts with TCF7. Ubiquitinated, leading to degradation.

It localises to the nucleus. It is found in the cytoplasm. Its subcellular location is the cytoskeleton. The protein resides in the microtubule organizing center. The protein localises to the centrosome. In terms of biological role, cofactor for the transcription factor TCF7. Involved in regulation of lymphoid development by driving multipotent hematopoietic progenitor cells towards a T-cell fate. The polypeptide is Protein AF1q (MLLT11) (Pongo abelii (Sumatran orangutan)).